We begin with the raw amino-acid sequence, 237 residues long: Coat protein (237 aa).

A disordered region spans residues 1–24 (MSAPASTTQATGSTTSTTTKTAGA).

It belongs to the potexvirus capsid protein family.

It is found in the virion. Required for genome encapsidation. Forms ribonucleoprotein complexes along with TGB1 helicase and viral RNA. In Brassica campestris (Field mustard), this protein is Coat protein.